Here is a 254-residue protein sequence, read N- to C-terminus: 4-hydroxy-tetrahydrodipicolinate reductase (254 aa).

Residues 8–13 (GCSGKM), Asp35, 86–88 (CST), and 110–113 (SANM) each bind NAD(+). Residue His143 is the Proton donor/acceptor of the active site. Position 144 (His144) interacts with (S)-2,3,4,5-tetrahydrodipicolinate. Lys147 (proton donor) is an active-site residue. 153-154 (GT) serves as a coordination point for (S)-2,3,4,5-tetrahydrodipicolinate.

The protein belongs to the DapB family.

The protein resides in the cytoplasm. The enzyme catalyses (S)-2,3,4,5-tetrahydrodipicolinate + NAD(+) + H2O = (2S,4S)-4-hydroxy-2,3,4,5-tetrahydrodipicolinate + NADH + H(+). The catalysed reaction is (S)-2,3,4,5-tetrahydrodipicolinate + NADP(+) + H2O = (2S,4S)-4-hydroxy-2,3,4,5-tetrahydrodipicolinate + NADPH + H(+). The protein operates within amino-acid biosynthesis; L-lysine biosynthesis via DAP pathway; (S)-tetrahydrodipicolinate from L-aspartate: step 4/4. Functionally, catalyzes the conversion of 4-hydroxy-tetrahydrodipicolinate (HTPA) to tetrahydrodipicolinate. The sequence is that of 4-hydroxy-tetrahydrodipicolinate reductase from Clostridium perfringens (strain 13 / Type A).